The following is a 506-amino-acid chain: Bone morphogenetic protein 6 (506 aa).

Residues 1-20 (MPGLGRRAQWLCWWWGLLCS) form the signal peptide. Residues 21–367 (CGPPPLRPPL…VSEVHVRTTR (347 aa)) constitute a propeptide that is removed on maturation. 3 disordered regions span residues 44–64 (AGGSPVRAEQPPPQSSSSGFL), 87–125 (PHRPRPLHGLQQPQSPVLPQQQQSQQTAREEPPPGRLKS), and 139–195 (KDDE…PLTS). Positions 96 to 112 (LQQPQSPVLPQQQQSQQ) are enriched in low complexity. The segment covering 140 to 153 (DDEEDGVSEGEGLE) has biased composition (acidic residues). Residues Asn234, Asn262, Asn379, Asn397, and Asn447 are each glycosylated (N-linked (GlcNAc...) asparagine). The tract at residues 366-397 (TRSASSRRRQQSRNRSTQSQDVSRGSSASDYN) is disordered. Polar residues predominate over residues 386-397 (DVSRGSSASDYN). Intrachain disulfides connect Cys405–Cys471, Cys434–Cys503, and Cys438–Cys505.

This sequence belongs to the TGF-beta family. Interacts with SOSTDC1. Interacts (when glycosylated) with type I receptor ACVR1; the interaction may induce HAMP expression. Interacts with type II receptor ACVR2B. Interacts with Hemojuvelin/HJV. Interacts with ERFE; the interaction inhibits BMP-induced transcription of HAMP. Interacts with BMPR1A/ALK3. Forms heterodimers with BMP2 in vitro; the heterodimer then binds to its receptor BMPR1A /ALK3 and may induce HAMP expression.

Its subcellular location is the secreted. In terms of biological role, growth factor of the TGF-beta superfamily that plays essential roles in many developmental processes including cartilage and bone formation. Also plays an important role in the regulation of HAMP/hepcidin expression and iron metabolism by acting as a ligand for hemojuvelin/HJV. Also acts to promote expression of HAMP, potentially via the interaction with its receptor BMPR1A/ALK3. Initiates the canonical BMP signaling cascade by associating with type I receptor ACVR1 and type II receptor ACVR2B. In turn, ACVR1 propagates signal by phosphorylating SMAD1/5/8 that travel to the nucleus and act as activators and repressors of transcription of target. Can also signal through non-canonical pathway such as TAZ-Hippo signaling cascade to modulate VEGF signaling by regulating VEGFR2 expression. The polypeptide is Bone morphogenetic protein 6 (Bmp6) (Rattus norvegicus (Rat)).